Here is a 91-residue protein sequence, read N- to C-terminus: Acylphosphatase (91 aa).

Positions 3–91 constitute an Acylphosphatase-like domain; it reads TVTMRVTGLV…EKFTRFSVVY (89 aa). Residues R18 and N36 contribute to the active site.

Belongs to the acylphosphatase family.

It carries out the reaction an acyl phosphate + H2O = a carboxylate + phosphate + H(+). In Lactobacillus johnsonii (strain CNCM I-12250 / La1 / NCC 533), this protein is Acylphosphatase (acyP).